The sequence spans 126 residues: Histone H2B type 1-B (126 aa).

Positions Met-1 to Lys-12 are enriched in low complexity. A disordered region spans residues Met-1–Glu-36. Pro-2 is modified (N-acetylproline). Position 3 is an ADP-ribosyl glutamic acid (Glu-3). Lys-6 is subject to N6-(2-hydroxyisobutyryl)lysine; alternate. N6-(beta-hydroxybutyryl)lysine; alternate is present on Lys-6. Lys-6 carries the N6-acetyllysine; alternate modification. Position 6 is an N6-butyryllysine; alternate (Lys-6). Lys-6 carries the N6-crotonyllysine; alternate modification. Position 6 is an N6-lactoyllysine; alternate (Lys-6). Lys-6 is covalently cross-linked (Glycyl lysine isopeptide (Lys-Gly) (interchain with G-Cter in SUMO2); alternate). Ser-7 is modified (ADP-ribosylserine). An N6-(beta-hydroxybutyryl)lysine; alternate modification is found at Lys-12. An N6-acetyllysine; alternate mark is found at Lys-12 and Lys-13. 2 positions are modified to N6-crotonyllysine; alternate: Lys-12 and Lys-13. Lys-12 is modified (N6-lactoyllysine; alternate). Lys-13 is subject to N6-(2-hydroxyisobutyryl)lysine; alternate. Phosphoserine; by STK4/MST1 is present on Ser-15. An N6-acetyllysine; alternate mark is found at Lys-16, Lys-17, Lys-21, and Lys-24. 4 positions are modified to N6-crotonyllysine; alternate: Lys-16, Lys-17, Lys-21, and Lys-24. N6-lactoyllysine; alternate is present on residues Lys-16, Lys-17, Lys-21, and Lys-24. The residue at position 17 (Lys-17) is an N6-glutaryllysine; alternate. N6-(2-hydroxyisobutyryl)lysine; alternate is present on residues Lys-21 and Lys-24. Lys-21 bears the N6-(beta-hydroxybutyryl)lysine; alternate mark. Lys-21 carries the N6-butyryllysine; alternate modification. Residue Lys-21 forms a Glycyl lysine isopeptide (Lys-Gly) (interchain with G-Cter in SUMO2); alternate linkage. Residue Lys-25 is modified to N6-(2-hydroxyisobutyryl)lysine. N6-(2-hydroxyisobutyryl)lysine; alternate is present on Lys-35. N6-(beta-hydroxybutyryl)lysine; alternate is present on Lys-35. Residue Lys-35 is modified to N6-crotonyllysine; alternate. At Lys-35 the chain carries N6-glutaryllysine; alternate. An N6-succinyllysine; alternate modification is found at Lys-35. Lys-35 participates in a covalent cross-link: Glycyl lysine isopeptide (Lys-Gly) (interchain with G-Cter in ubiquitin); alternate. At Glu-36 the chain carries PolyADP-ribosyl glutamic acid. Position 37 is a phosphoserine; by AMPK (Ser-37). Lys-44, Lys-47, and Lys-58 each carry N6-(2-hydroxyisobutyryl)lysine; alternate. The residue at position 44 (Lys-44) is an N6-lactoyllysine; alternate. N6-glutaryllysine; alternate is present on residues Lys-44 and Lys-47. Lys-47 bears the N6-methyllysine; alternate mark. An N6,N6-dimethyllysine; alternate modification is found at Lys-58. Arg-80 carries the post-translational modification Dimethylated arginine. An N6-(2-hydroxyisobutyryl)lysine; alternate modification is found at Lys-86. Lys-86 is subject to N6-acetyllysine; alternate. Lys-86 carries the N6-lactoyllysine; alternate modification. Lys-86 bears the N6,N6,N6-trimethyllysine; alternate mark. Omega-N-methylarginine occurs at positions 87 and 93. Lys-109 bears the N6-(2-hydroxyisobutyryl)lysine; alternate mark. The residue at position 109 (Lys-109) is an N6-(beta-hydroxybutyryl)lysine; alternate. Lys-109 carries the N6-lactoyllysine; alternate modification. Lys-109 is subject to N6-glutaryllysine; alternate. At Lys-109 the chain carries N6-methyllysine; alternate. Residue Ser-113 is glycosylated (O-linked (GlcNAc) serine). Residue Thr-116 is modified to Phosphothreonine. An N6-(2-hydroxyisobutyryl)lysine; alternate mark is found at Lys-117 and Lys-121. An N6-(beta-hydroxybutyryl)lysine; alternate modification is found at Lys-117. 2 positions are modified to N6-lactoyllysine; alternate: Lys-117 and Lys-121. N6-glutaryllysine; alternate occurs at positions 117 and 121. Residues Lys-117 and Lys-121 each carry the N6-succinyllysine; alternate modification. Lys-117 is subject to N6-methylated lysine; alternate. A Glycyl lysine isopeptide (Lys-Gly) (interchain with G-Cter in ubiquitin); alternate cross-link involves residue Lys-121.

This sequence belongs to the histone H2B family. As to quaternary structure, the nucleosome is a histone octamer containing two molecules each of H2A, H2B, H3 and H4 assembled in one H3-H4 heterotetramer and two H2A-H2B heterodimers. The octamer wraps approximately 147 bp of DNA. Monoubiquitination at Lys-35 (H2BK34Ub) by the MSL1/MSL2 dimer is required for histone H3 'Lys-4' (H3K4me) and 'Lys-79' (H3K79me) methylation and transcription activation at specific gene loci, such as HOXA9 and MEIS1 loci. Similarly, monoubiquitination at Lys-121 (H2BK120Ub) by the RNF20/40 complex gives a specific tag for epigenetic transcriptional activation and is also prerequisite for histone H3 'Lys-4' and 'Lys-79' methylation. It also functions cooperatively with the FACT dimer to stimulate elongation by RNA polymerase II. H2BK120Ub also acts as a regulator of mRNA splicing: deubiquitination by USP49 is required for efficient cotranscriptional splicing of a large set of exons. In terms of processing, phosphorylated on Ser-15 (H2BS14ph) by STK4/MST1 during apoptosis; which facilitates apoptotic chromatin condensation. Also phosphorylated on Ser-15 in response to DNA double strand breaks (DSBs), and in correlation with somatic hypermutation and immunoglobulin class-switch recombination. Phosphorylation at Ser-37 (H2BS36ph) by AMPK in response to stress promotes transcription. Post-translationally, glcNAcylation at Ser-113 promotes monoubiquitination of Lys-121. It fluctuates in response to extracellular glucose, and associates with transcribed genes. ADP-ribosylated by PARP1 or PARP2 on Ser-7 (H2BS6ADPr) in response to DNA damage. H2BS6ADPr promotes recruitment of CHD1L. Mono-ADP-ribosylated on Glu-3 (H2BE2ADPr) by PARP3 in response to single-strand breaks. Poly ADP-ribosylation on Glu-36 (H2BE35ADPr) by PARP1 regulates adipogenesis: it inhibits phosphorylation at Ser-37 (H2BS36ph), thereby blocking expression of pro-adipogenetic genes. In terms of processing, hydroxybutyrylation of histones is induced by starvation. Post-translationally, crotonylation (Kcr) is specifically present in male germ cells and marks testis-specific genes in post-meiotic cells, including X-linked genes that escape sex chromosome inactivation in haploid cells. Crotonylation marks active promoters and enhancers and confers resistance to transcriptional repressors. It is also associated with post-meiotically activated genes on autosomes. Lactylated in macrophages by EP300/P300 by using lactoyl-CoA directly derived from endogenous or exogenous lactate, leading to stimulates gene transcription.

It is found in the nucleus. The protein resides in the chromosome. Its function is as follows. Core component of nucleosome. Nucleosomes wrap and compact DNA into chromatin, limiting DNA accessibility to the cellular machineries which require DNA as a template. Histones thereby play a central role in transcription regulation, DNA repair, DNA replication and chromosomal stability. DNA accessibility is regulated via a complex set of post-translational modifications of histones, also called histone code, and nucleosome remodeling. This is Histone H2B type 1-B from Mus musculus (Mouse).